The following is a 656-amino-acid chain: Putative L-type lectin-domain containing receptor kinase V.2 (656 aa).

A signal peptide spans 1–23; that stretch reads MSLLLKMLLFSLFFFYMASISQC. The Extracellular portion of the chain corresponds to 24–276; that stretch reads SDPTGGQFSF…EDQERSLSSK (253 aa). Positions 29 to 248 are legume-lectin like; sequence GQFSFNGYLY…SHYILGWSFN (220 aa). Asparagine 78, asparagine 124, asparagine 159, asparagine 190, and asparagine 257 each carry an N-linked (GlcNAc...) asparagine glycan. A helical membrane pass occupies residues 277–297; the sequence is ILAISLSISGVTLVIVLILGV. Residues 298–656 lie on the Cytoplasmic side of the membrane; that stretch reads MLFLKRKKFL…MTESFLSSGR (359 aa). The Protein kinase domain maps to 334–615; that stretch reads FKNSEVLGKG…GVATLPHNLL (282 aa). Residues 340–348 and lysine 363 each bind ATP; that span reads LGKGGFGKV. Aspartate 459 functions as the Proton acceptor in the catalytic mechanism.

This sequence in the C-terminal section; belongs to the protein kinase superfamily. Ser/Thr protein kinase family. In the N-terminal section; belongs to the leguminous lectin family.

The protein localises to the cell membrane. The enzyme catalyses L-seryl-[protein] + ATP = O-phospho-L-seryl-[protein] + ADP + H(+). It carries out the reaction L-threonyl-[protein] + ATP = O-phospho-L-threonyl-[protein] + ADP + H(+). The chain is Putative L-type lectin-domain containing receptor kinase V.2 (LECRK52) from Arabidopsis thaliana (Mouse-ear cress).